The chain runs to 451 residues: 2-succinylbenzoate--CoA ligase (451 aa).

It belongs to the ATP-dependent AMP-binding enzyme family. MenE subfamily.

The catalysed reaction is 2-succinylbenzoate + ATP + CoA = 2-succinylbenzoyl-CoA + AMP + diphosphate. It participates in quinol/quinone metabolism; 1,4-dihydroxy-2-naphthoate biosynthesis; 1,4-dihydroxy-2-naphthoate from chorismate: step 5/7. The protein operates within quinol/quinone metabolism; menaquinone biosynthesis. Converts 2-succinylbenzoate (OSB) to 2-succinylbenzoyl-CoA (OSB-CoA). In Escherichia coli (strain K12), this protein is 2-succinylbenzoate--CoA ligase.